Here is a 401-residue protein sequence, read N- to C-terminus: Protein IQ-DOMAIN 24 (401 aa).

Residues 1–48 (MGFFGRLFGSKKQEKATPNRRRWSFATRSSHPENDSSSHSSKRRGDED) form a disordered region. Residues 105–121 (EYKAAMKIQSAFRGYLA) form a calmodulin-binding region. IQ domains follow at residues 105–133 (EYKAAMKIQSAFRGYLARRALRALKALVK) and 134–156 (LQALVKGHIVRKQTADMLRRMQT). Low complexity-rich tracts occupy residues 165-176 (RASRSSHVSDSS) and 278-287 (RSRTGSSSGG). Disordered regions lie at residues 165-186 (RASRSSHVSDSSHPPTLMIPSS) and 258-296 (SPRKRGSLVVPTSVENSPQLRSRTGSSSGGSRRKTPFTP).

It belongs to the IQD family. In terms of assembly, binds to multiple calmodulin (CaM) in the presence of Ca(2+) and CaM-like proteins.

Its subcellular location is the nucleus. It is found in the nuclear body. The protein resides in the cell membrane. Its function is as follows. May be involved in cooperative interactions with calmodulins or calmodulin-like proteins. Recruits calmodulin proteins to microtubules, thus being a potential scaffold in cellular signaling and trafficking. May associate with nucleic acids and regulate gene expression at the transcriptional or post-transcriptional level. The polypeptide is Protein IQ-DOMAIN 24 (Arabidopsis thaliana (Mouse-ear cress)).